The primary structure comprises 483 residues: Chromosomal replication initiator protein DnaA (483 aa).

Positions 1–71 (MKEFWQTCVS…EALAAEWYQR (71 aa)) are domain I, interacts with DnaA modulators. The interval 71 to 145 (RPVQVQFELP…DAANIVYERS (75 aa)) is domain II. The tract at residues 146–362 (RLNTDLTFEN…GALRKVLAYA (217 aa)) is domain III, AAA+ region. ATP-binding residues include glycine 190, glycine 192, lysine 193, and threonine 194. The interval 363–483 (RFHGREALNV…LHVLEQTLKG (121 aa)) is domain IV, binds dsDNA.

Belongs to the DnaA family. As to quaternary structure, oligomerizes as a right-handed, spiral filament on DNA at oriC.

Its subcellular location is the cytoplasm. Functionally, plays an essential role in the initiation and regulation of chromosomal replication. ATP-DnaA binds to the origin of replication (oriC) to initiate formation of the DNA replication initiation complex once per cell cycle. Binds the DnaA box (a 9 base pair repeat at the origin) and separates the double-stranded (ds)DNA. Forms a right-handed helical filament on oriC DNA; dsDNA binds to the exterior of the filament while single-stranded (ss)DNA is stabiized in the filament's interior. The ATP-DnaA-oriC complex binds and stabilizes one strand of the AT-rich DNA unwinding element (DUE), permitting loading of DNA polymerase. After initiation quickly degrades to an ADP-DnaA complex that is not apt for DNA replication. Binds acidic phospholipids. The polypeptide is Chromosomal replication initiator protein DnaA (Bordetella avium (strain 197N)).